Reading from the N-terminus, the 500-residue chain is Protein DETOXIFICATION 24 (500 aa).

The tract at residues 1–20 is disordered; sequence MSTQEEMEERLLREGSDAEG. Helical transmembrane passes span 48-67, 72-92, 124-144, 160-180, 188-208, 225-245, 266-286, 298-318, 342-362, 384-404, 411-431, and 441-461; these read SSLF…AFIG, LGLA…YGLM, IVDM…GPIL, IYPW…IQMY, AIVG…TWWC, VGSW…WCPF, ISSG…VLMA, AFSI…GFLG, VILT…LAFC, VILA…GVAV, IVAV…GLIL, and GLWS…CYII.

Belongs to the multi antimicrobial extrusion (MATE) (TC 2.A.66.1) family.

It localises to the membrane. The chain is Protein DETOXIFICATION 24 from Arabidopsis thaliana (Mouse-ear cress).